A 511-amino-acid chain; its full sequence is GMP synthase [glutamine-hydrolyzing] (511 aa).

A Glutamine amidotransferase type-1 domain is found at 3–198 (SVLVLDFGSQ…LLNIAAITPD (196 aa)). The active-site Nucleophile is the cysteine 80. Active-site residues include histidine 172 and glutamate 174. Residues 199–386 (WSSKSFIEHQ…LGIPEDILMR (188 aa)) form the GMPS ATP-PPase domain. An ATP-binding site is contributed by 226–232 (SGGVDST).

As to quaternary structure, homodimer.

It carries out the reaction XMP + L-glutamine + ATP + H2O = GMP + L-glutamate + AMP + diphosphate + 2 H(+). Its pathway is purine metabolism; GMP biosynthesis; GMP from XMP (L-Gln route): step 1/1. Catalyzes the synthesis of GMP from XMP. This is GMP synthase [glutamine-hydrolyzing] from Chlorobium chlorochromatii (strain CaD3).